The sequence spans 300 residues: Cation-efflux pump FieF (300 aa).

Residues 24–44 (LLIKIFAWWYTGSVSILAALV) form a helical membrane-spanning segment. Asp-45 and Asp-49 together coordinate Zn(2+). 2 helical membrane passes run 82 to 102 (AALA…LTSI) and 114 to 134 (PGVG…LVTF). Zn(2+)-binding residues include His-153 and Asp-157. The next 2 membrane-spanning stretches (helical) occupy residues 156–176 (SDVM…YGWH) and 178–198 (ADAL…LRMG).

It belongs to the cation diffusion facilitator (CDF) transporter (TC 2.A.4) family. FieF subfamily. Homodimer.

It localises to the cell inner membrane. The enzyme catalyses Zn(2+)(in) + H(+)(out) = Zn(2+)(out) + H(+)(in). The catalysed reaction is Cd(2+)(in) + H(+)(out) = Cd(2+)(out) + H(+)(in). It catalyses the reaction Fe(2+)(in) + H(+)(out) = Fe(2+)(out) + H(+)(in). Divalent metal cation transporter which exports Zn(2+), Cd(2+) and possibly Fe(2+). May be involved in zinc and iron detoxification by efflux. This chain is Cation-efflux pump FieF, found in Salmonella choleraesuis (strain SC-B67).